The primary structure comprises 710 residues: Mitochondrial intermediate peptidase (710 aa).

Residues 1–33 constitute a mitochondrion transit peptide; sequence MLLAAGTRYAYRLCGRRAAAALQGRAGRSCARS. Lysine 124 is subject to N6-acetyllysine. Residue histidine 492 coordinates Zn(2+). The active site involves glutamate 493. Zn(2+) is bound by residues histidine 496 and histidine 499.

The protein belongs to the peptidase M3 family. As to quaternary structure, monomer. The cofactor is Zn(2+).

The protein localises to the mitochondrion matrix. The catalysed reaction is Release of an N-terminal octapeptide as second stage of processing of some proteins imported into the mitochondrion.. Activity is divalent cation-dependent. It is stimulated by manganese, magnesium or calcium ions and reversibly inhibited by zinc, cobalt and iron. Cleaves proteins, imported into the mitochondrion, to their mature size. This chain is Mitochondrial intermediate peptidase (Mipep), found in Rattus norvegicus (Rat).